The sequence spans 496 residues: Probable cytosol aminopeptidase (496 aa).

K258 and D263 together coordinate Mn(2+). Residue K270 is part of the active site. Residues D281, D340, and E342 each contribute to the Mn(2+) site. The active site involves R344.

The protein belongs to the peptidase M17 family. Requires Mn(2+) as cofactor.

Its subcellular location is the cytoplasm. It catalyses the reaction Release of an N-terminal amino acid, Xaa-|-Yaa-, in which Xaa is preferably Leu, but may be other amino acids including Pro although not Arg or Lys, and Yaa may be Pro. Amino acid amides and methyl esters are also readily hydrolyzed, but rates on arylamides are exceedingly low.. The catalysed reaction is Release of an N-terminal amino acid, preferentially leucine, but not glutamic or aspartic acids.. Its function is as follows. Presumably involved in the processing and regular turnover of intracellular proteins. Catalyzes the removal of unsubstituted N-terminal amino acids from various peptides. The protein is Probable cytosol aminopeptidase of Helicobacter pylori (strain G27).